The primary structure comprises 220 residues: N-(5'-phosphoribosyl)anthranilate isomerase (220 aa).

Belongs to the TrpF family.

It carries out the reaction N-(5-phospho-beta-D-ribosyl)anthranilate = 1-(2-carboxyphenylamino)-1-deoxy-D-ribulose 5-phosphate. Its pathway is amino-acid biosynthesis; L-tryptophan biosynthesis; L-tryptophan from chorismate: step 3/5. The chain is N-(5'-phosphoribosyl)anthranilate isomerase from Bordetella petrii (strain ATCC BAA-461 / DSM 12804 / CCUG 43448).